The sequence spans 514 residues: Membrane-bound lytic murein transglycosylase F (514 aa).

The signal sequence occupies residues 1–30; sequence MKKLKINYLFIGILTLLLAAALWPSIPWFG. The interval 31-269 is non-LT domain; it reads KTENHVAAIQ…RIEEKYLGHG (239 aa). Residues 270–514 are LT domain; it reads DDFDYVDTRS…LFTPQKKEEK (245 aa). Glu-314 is a catalytic residue.

The protein in the N-terminal section; belongs to the bacterial solute-binding protein 3 family. This sequence in the C-terminal section; belongs to the transglycosylase Slt family.

Its subcellular location is the cell outer membrane. The enzyme catalyses Exolytic cleavage of the (1-&gt;4)-beta-glycosidic linkage between N-acetylmuramic acid (MurNAc) and N-acetylglucosamine (GlcNAc) residues in peptidoglycan, from either the reducing or the non-reducing ends of the peptidoglycan chains, with concomitant formation of a 1,6-anhydrobond in the MurNAc residue.. Functionally, murein-degrading enzyme that degrades murein glycan strands and insoluble, high-molecular weight murein sacculi, with the concomitant formation of a 1,6-anhydromuramoyl product. Lytic transglycosylases (LTs) play an integral role in the metabolism of the peptidoglycan (PG) sacculus. Their lytic action creates space within the PG sacculus to allow for its expansion as well as for the insertion of various structures such as secretion systems and flagella. In Salmonella arizonae (strain ATCC BAA-731 / CDC346-86 / RSK2980), this protein is Membrane-bound lytic murein transglycosylase F.